We begin with the raw amino-acid sequence, 979 residues long: UPF0182 protein Mb0065 (979 aa).

7 helical membrane-spanning segments follow: residues 19-41 (LVTA…DIYV), 63-85 (LAIV…LLAY), 114-136 (LFGW…FDWV), 174-196 (WLFV…FGGL), 208-230 (AARV…AYWL), 261-280 (LVLV…AIFL), and 285-307 (IPAM…WPLL). A disordered region spans residues 898-948 (GTGRVATAPGGDAASAPPPGAGGPAPPQAVPPPRTTQPPAAPPRGPDVPPA). The segment covering 902-912 (VATAPGGDAAS) has biased composition (low complexity). The segment covering 913-946 (APPPGAGGPAPPQAVPPPRTTQPPAAPPRGPDVP) has biased composition (pro residues).

It belongs to the UPF0182 family.

It is found in the cell membrane. In Mycobacterium bovis (strain ATCC BAA-935 / AF2122/97), this protein is UPF0182 protein Mb0065.